Here is a 644-residue protein sequence, read N- to C-terminus: MQGFLRSLFFGVKKIPKPFAPLVEKGVLKEALELKKDRYFLKEGFDIGKVEKVKDKAFFISLAKNYPKDPLIKNLPPSFKTDALILCQIECSKKRPIAFFKAALLNADHTMIAYLAKKNNQIVAIPFKEPFKKPVSLKHSQKSLLELPRHCVVKIDTKKREISEILGALEDPLIDENLSLSLFDRVKDFSKDCLNLAQHYAQLKASDFKDRINYSHIPFITIDPKDAKDFDDAIFYDQEKRVLFVAVADVSEFVPKHSSLDKEARVRGFSVYFPNSVYPMLPLSLSQGACSLKAFEKRLALVYEIPLDNLKNARLSQGVIEVRANCTYEEINHFLSANQSSLDKDLQQSLLGFLEMALKLKKERLKKGFNFNSFENKLYLNKEGRIEKIETEKESDAHTLIEEAMLLANQSSARLLDEHFHNKGIYRTHKEPSLEQQKRLYDKLFDYEIVRPKNMGFFPFLEHALKIAKEKSIEREVSRLIIKSQNLALYSPLQESHFGLGFASYTHFTSPIRRYSDLALHRLLKELLFYQAKGCSYLLEETPELCAELNALQKKAALIERDFIKRKFARLALELLEKEFLGVVLEVKDWVVVGLKEFIGLKVLVKTNKVFKPLEKVRVTITHADLILGQVRGEITERIKEHVS.

Residues 211-529 enclose the RNB domain; the sequence is RINYSHIPFI…LHRLLKELLF (319 aa). In terms of domain architecture, S1 motif spans 573 to 644; that stretch reads LELLEKEFLG…ITERIKEHVS (72 aa).

Belongs to the RNR ribonuclease family. RNase R subfamily.

It localises to the cytoplasm. The catalysed reaction is Exonucleolytic cleavage in the 3'- to 5'-direction to yield nucleoside 5'-phosphates.. 3'-5' exoribonuclease that releases 5'-nucleoside monophosphates and is involved in maturation of structured RNAs. The protein is Ribonuclease R of Helicobacter pylori (strain ATCC 700392 / 26695) (Campylobacter pylori).